The sequence spans 448 residues: Putative carbonic anhydrase 2 (448 aa).

The region spanning 1–222 is the Alpha-carbonic anhydrase domain; that stretch reads AYRQTENLLY…PAERDVFRII (222 aa). His-19 serves as a coordination point for Zn(2+). N-linked (GlcNAc...) asparagine glycosylation is found at Asn-139 and Asn-198. The disordered stretch occupies residues 229–448; the sequence is RREEDDERGD…DKGDDKGDDN (220 aa). The segment covering 245–280 has biased composition (acidic residues); the sequence is DDDDNYDDDDYYNDDYSNDDYYDDDYYYDDYDDDTD. Basic and acidic residues-rich tracts occupy residues 281-334 and 342-354; these read DDHK…DDSG and RDGRGNGDSRDRN. An N-linked (GlcNAc...) asparagine glycan is attached at Asn-314. Residues 357–368 show a composition bias toward gly residues; the sequence is NGNGRENGGVRG. A compositionally biased stretch (basic and acidic residues) spans 370–379; the sequence is GNDRDGRRDN. The N-linked (GlcNAc...) asparagine glycan is linked to Asn-385. The span at 386–421 shows a compositional bias: basic and acidic residues; it reads GTRRGNGDDRGGRRNEDRGENRRGKDDQERESEDGR. Residues 422-435 show a composition bias toward basic residues; sequence RRRRRFNGRRRRRG. Residues 436–448 show a composition bias toward basic and acidic residues; sequence RGDDKGDDKGDDN.

The protein belongs to the alpha-carbonic anhydrase family. Component of the acid-insoluble and acid-soluble organic matrix of calcified layers of the shell (at protein level).

It localises to the secreted. It catalyses the reaction hydrogencarbonate + H(+) = CO2 + H2O. Reversible hydration of carbon dioxide. The polypeptide is Putative carbonic anhydrase 2 (Lottia gigantea (Giant owl limpet)).